The primary structure comprises 170 residues: Adenine phosphoribosyltransferase (170 aa).

This sequence belongs to the purine/pyrimidine phosphoribosyltransferase family. As to quaternary structure, homodimer.

It is found in the cytoplasm. The catalysed reaction is AMP + diphosphate = 5-phospho-alpha-D-ribose 1-diphosphate + adenine. The protein operates within purine metabolism; AMP biosynthesis via salvage pathway; AMP from adenine: step 1/1. In terms of biological role, catalyzes a salvage reaction resulting in the formation of AMP, that is energically less costly than de novo synthesis. The polypeptide is Adenine phosphoribosyltransferase (Pseudothermotoga lettingae (strain ATCC BAA-301 / DSM 14385 / NBRC 107922 / TMO) (Thermotoga lettingae)).